Reading from the N-terminus, the 1240-residue chain is DNA-directed RNA polymerase subunit beta (1240 aa).

Belongs to the RNA polymerase beta chain family. As to quaternary structure, the RNAP catalytic core consists of 2 alpha, 1 beta, 1 beta' and 1 omega subunit. When a sigma factor is associated with the core the holoenzyme is formed, which can initiate transcription.

It catalyses the reaction RNA(n) + a ribonucleoside 5'-triphosphate = RNA(n+1) + diphosphate. In terms of biological role, DNA-dependent RNA polymerase catalyzes the transcription of DNA into RNA using the four ribonucleoside triphosphates as substrates. This Phytoplasma australiense protein is DNA-directed RNA polymerase subunit beta.